The primary structure comprises 91 residues: Small ribosomal subunit protein uS15c (91 aa).

This sequence belongs to the universal ribosomal protein uS15 family. Part of the 30S ribosomal subunit.

The protein resides in the plastid. It localises to the chloroplast. The protein is Small ribosomal subunit protein uS15c (rps15) of Ceratophyllum demersum (Rigid hornwort).